A 423-amino-acid polypeptide reads, in one-letter code: Glutamate-1-semialdehyde 2,1-aminomutase (423 aa).

An N6-(pyridoxal phosphate)lysine modification is found at Lys259.

It belongs to the class-III pyridoxal-phosphate-dependent aminotransferase family. HemL subfamily. Homodimer. Pyridoxal 5'-phosphate serves as cofactor.

The protein localises to the cytoplasm. It carries out the reaction (S)-4-amino-5-oxopentanoate = 5-aminolevulinate. The protein operates within porphyrin-containing compound metabolism; protoporphyrin-IX biosynthesis; 5-aminolevulinate from L-glutamyl-tRNA(Glu): step 2/2. The sequence is that of Glutamate-1-semialdehyde 2,1-aminomutase from Thermosipho melanesiensis (strain DSM 12029 / CIP 104789 / BI429).